The following is a 187-amino-acid chain: Ribosome-recycling factor (187 aa).

Belongs to the RRF family.

It is found in the cytoplasm. Responsible for the release of ribosomes from messenger RNA at the termination of protein biosynthesis. May increase the efficiency of translation by recycling ribosomes from one round of translation to another. This chain is Ribosome-recycling factor, found in Ruegeria sp. (strain TM1040) (Silicibacter sp.).